Consider the following 182-residue polypeptide: Putative manganese efflux pump MntP (182 aa).

Transmembrane regions (helical) follow at residues threonine 6 to threonine 26, leucine 37 to serine 57, alanine 59 to glycine 79, serine 104 to isoleucine 126, leucine 131 to alanine 149, and methionine 164 to leucine 181.

The protein belongs to the MntP (TC 9.B.29) family.

It localises to the cell inner membrane. Functionally, probably functions as a manganese efflux pump. The sequence is that of Putative manganese efflux pump MntP from Syntrophobacter fumaroxidans (strain DSM 10017 / MPOB).